Reading from the N-terminus, the 566-residue chain is Proline--tRNA ligase (566 aa).

Belongs to the class-II aminoacyl-tRNA synthetase family. ProS type 1 subfamily. As to quaternary structure, homodimer.

It is found in the cytoplasm. It catalyses the reaction tRNA(Pro) + L-proline + ATP = L-prolyl-tRNA(Pro) + AMP + diphosphate. Functionally, catalyzes the attachment of proline to tRNA(Pro) in a two-step reaction: proline is first activated by ATP to form Pro-AMP and then transferred to the acceptor end of tRNA(Pro). As ProRS can inadvertently accommodate and process non-cognate amino acids such as alanine and cysteine, to avoid such errors it has two additional distinct editing activities against alanine. One activity is designated as 'pretransfer' editing and involves the tRNA(Pro)-independent hydrolysis of activated Ala-AMP. The other activity is designated 'posttransfer' editing and involves deacylation of mischarged Ala-tRNA(Pro). The misacylated Cys-tRNA(Pro) is not edited by ProRS. The chain is Proline--tRNA ligase from Campylobacter concisus (strain 13826).